The sequence spans 475 residues: ATP synthase subunit beta (475 aa).

ATP is bound at residue 152-159 (GGAGVGKT).

It belongs to the ATPase alpha/beta chains family. In terms of assembly, F-type ATPases have 2 components, CF(1) - the catalytic core - and CF(0) - the membrane proton channel. CF(1) has five subunits: alpha(3), beta(3), gamma(1), delta(1), epsilon(1). CF(0) has three main subunits: a(1), b(2) and c(9-12). The alpha and beta chains form an alternating ring which encloses part of the gamma chain. CF(1) is attached to CF(0) by a central stalk formed by the gamma and epsilon chains, while a peripheral stalk is formed by the delta and b chains.

It is found in the cell membrane. It carries out the reaction ATP + H2O + 4 H(+)(in) = ADP + phosphate + 5 H(+)(out). Produces ATP from ADP in the presence of a proton gradient across the membrane. The catalytic sites are hosted primarily by the beta subunits. This is ATP synthase subunit beta from Wolbachia pipientis wMel.